We begin with the raw amino-acid sequence, 499 residues long: Probable dipeptidase B (499 aa).

Residue cysteine 26 is part of the active site.

The protein belongs to the peptidase C69 family.

It carries out the reaction an L-aminoacyl-L-amino acid + H2O = 2 an L-alpha-amino acid. This chain is Probable dipeptidase B (pepDB), found in Streptococcus pyogenes serotype M3 (strain ATCC BAA-595 / MGAS315).